We begin with the raw amino-acid sequence, 335 residues long: Peroxidase 53 (335 aa).

Residues 1–30 form the signal peptide; sequence MAVTNLPTCDGLFIISLIVIVSSIFGTSSA. Gln-31 carries the pyrrolidone carboxylic acid modification. N-linked (GlcNAc...) asparagine glycosylation is found at Asn-33 and Asn-43. 4 disulfides stabilise this stretch: Cys-41-Cys-121, Cys-74-Cys-79, Cys-127-Cys-329, and Cys-206-Cys-238. Residue His-72 is the Proton acceptor of the active site. 5 residues coordinate Ca(2+): Asp-73, Val-76, Gly-78, Asp-80, and Ser-82. Residue Asn-165 is glycosylated (N-linked (GlcNAc...) asparagine). Pro-169 is a substrate binding site. N-linked (GlcNAc...) asparagine glycosylation occurs at Asn-177. His-199 provides a ligand contact to heme b. Thr-200 contributes to the Ca(2+) binding site. Asn-215, Asn-227, and Asn-241 each carry an N-linked (GlcNAc...) asparagine glycan. Asp-251, Thr-254, and Asp-259 together coordinate Ca(2+). Asn-297 carries an N-linked (GlcNAc...) asparagine glycan.

It belongs to the peroxidase family. Classical plant (class III) peroxidase subfamily. Ca(2+) serves as cofactor. The cofactor is heme b. Mainly expressed in roots.

Its subcellular location is the secreted. The enzyme catalyses 2 a phenolic donor + H2O2 = 2 a phenolic radical donor + 2 H2O. Its function is as follows. Removal of H(2)O(2), oxidation of toxic reductants, biosynthesis and degradation of lignin, suberization, auxin catabolism, response to environmental stresses such as wounding, pathogen attack and oxidative stress. These functions might be dependent on each isozyme/isoform in each plant tissue. Closely linked to lignin formation by showing monolignol substrate specificity. The chain is Peroxidase 53 (PER53) from Arabidopsis thaliana (Mouse-ear cress).